Consider the following 324-residue polypeptide: tRNA dimethylallyltransferase (324 aa).

ATP is bound at residue 18-25; it reads GPTAVGKT. A substrate-binding site is contributed by 20-25; that stretch reads TAVGKT. The segment at 43–46 is interaction with substrate tRNA; that stretch reads DSRQ.

The protein belongs to the IPP transferase family. Monomer. Mg(2+) serves as cofactor.

It catalyses the reaction adenosine(37) in tRNA + dimethylallyl diphosphate = N(6)-dimethylallyladenosine(37) in tRNA + diphosphate. In terms of biological role, catalyzes the transfer of a dimethylallyl group onto the adenine at position 37 in tRNAs that read codons beginning with uridine, leading to the formation of N6-(dimethylallyl)adenosine (i(6)A). The chain is tRNA dimethylallyltransferase from Salinibacter ruber (strain DSM 13855 / M31).